Consider the following 319-residue polypeptide: Phospho-N-acetylmuramoyl-pentapeptide-transferase (319 aa).

10 helical membrane passes run leucine 5–phenylalanine 25, threonine 51–tryptophan 71, threonine 79–isoleucine 99, leucine 116–phenylalanine 136, serine 149–leucine 169, glycine 172–alanine 192, asparagine 197–phenylalanine 217, isoleucine 224–phenylalanine 244, leucine 252–phenylalanine 272, and valine 299–glycine 319.

It belongs to the glycosyltransferase 4 family. MraY subfamily. Requires Mg(2+) as cofactor.

It is found in the cell membrane. It carries out the reaction UDP-N-acetyl-alpha-D-muramoyl-L-alanyl-gamma-D-glutamyl-L-lysyl-D-alanyl-D-alanine + di-trans,octa-cis-undecaprenyl phosphate = Mur2Ac(oyl-L-Ala-gamma-D-Glu-L-Lys-D-Ala-D-Ala)-di-trans,octa-cis-undecaprenyl diphosphate + UMP. It participates in cell wall biogenesis; peptidoglycan biosynthesis. Its function is as follows. Catalyzes the initial step of the lipid cycle reactions in the biosynthesis of the cell wall peptidoglycan: transfers peptidoglycan precursor phospho-MurNAc-pentapeptide from UDP-MurNAc-pentapeptide onto the lipid carrier undecaprenyl phosphate, yielding undecaprenyl-pyrophosphoryl-MurNAc-pentapeptide, known as lipid I. The chain is Phospho-N-acetylmuramoyl-pentapeptide-transferase from Lactobacillus gasseri (strain ATCC 33323 / DSM 20243 / BCRC 14619 / CIP 102991 / JCM 1131 / KCTC 3163 / NCIMB 11718 / NCTC 13722 / AM63).